The following is a 385-amino-acid chain: Transcription termination factor 2, mitochondrial (385 aa).

The transit peptide at 1 to 35 (MSWRLLTGYQLCRLRLFRKPQPALKIRPSSVCVTY) directs the protein to the mitochondrion.

Belongs to the mTERF family. In terms of assembly, monomer.

The protein resides in the mitochondrion matrix. Its subcellular location is the mitochondrion nucleoid. Its function is as follows. Binds mitochondrial DNA and plays a role in the regulation of transcription of mitochondrial mRNA and rRNA species. The polypeptide is Transcription termination factor 2, mitochondrial (Mterf2) (Rattus norvegicus (Rat)).